Reading from the N-terminus, the 352-residue chain is tRNA N6-adenosine threonylcarbamoyltransferase (352 aa).

His114, His118, and Tyr135 together coordinate a divalent metal cation. Residues 135 to 139 (YVSGG), Asp167, Gly182, Glu186, and Asn283 each bind substrate. Asp311 serves as a coordination point for a divalent metal cation.

Belongs to the KAE1 / TsaD family. Component of the EKC/KEOPS complex composed of at least BUD32, CGI121, GON7, KAE1 and PCC1; the whole complex dimerizes. A divalent metal cation serves as cofactor.

The protein localises to the cytoplasm. It localises to the nucleus. It carries out the reaction L-threonylcarbamoyladenylate + adenosine(37) in tRNA = N(6)-L-threonylcarbamoyladenosine(37) in tRNA + AMP + H(+). Functionally, component of the EKC/KEOPS complex that is required for the formation of a threonylcarbamoyl group on adenosine at position 37 (t(6)A37) in tRNAs that read codons beginning with adenine. The complex is probably involved in the transfer of the threonylcarbamoyl moiety of threonylcarbamoyl-AMP (TC-AMP) to the N6 group of A37. KAE1 likely plays a direct catalytic role in this reaction, but requires other protein(s) of the complex to fulfill this activity. The EKC/KEOPS complex also promotes both telomere uncapping and telomere elongation. The complex is required for efficient recruitment of transcriptional coactivators. The sequence is that of tRNA N6-adenosine threonylcarbamoyltransferase from Phaeosphaeria nodorum (strain SN15 / ATCC MYA-4574 / FGSC 10173) (Glume blotch fungus).